The primary structure comprises 338 residues: MVKIKEVAMNIKINEIKMTPPTAFTPGQVIEEQEVISPSMLALQELQETTGAALYETMEEIGMALSGKLRENYKFTDAEKLERRQQALLRLIKQIQEDNGATLRPLTEENSDPDLQNAYQIIALAMALTAGGLSKKKKRDLQSQLDTLTAEEGWELAVFSLLELGEVDTATLSSLKRFMQQAIDNDEMPLSQWFRRVADWPDRCERVRILLRAVAFELSICIEPSEQSRLAAALVRLRRLLLFLGLEKECQREEWICQLPPNTLLPLLLDIICERWLFSDWLLDRLTAIVSSSKMFNRLLQQLDAQFMLIPDNCFNDEDQREQILETLREVKINQVLF.

The polypeptide is Secretion system apparatus protein SsaL (ssaL) (Salmonella typhimurium (strain LT2 / SGSC1412 / ATCC 700720)).